Consider the following 393-residue polypeptide: 6-hydroxy-3-succinoylpyridine 3-monooxygenase HspB (393 aa).

Residues 6-35 and 277-287 contribute to the FAD site; these read RVII…VLEA and MRNGRVILIGD.

The protein belongs to the PheA/TfdB FAD monooxygenase family. In terms of assembly, homodimer. FAD serves as cofactor.

The enzyme catalyses 4-(6-hydroxypyridin-3-yl)-4-oxobutanoate + 2 NADH + O2 + 2 H(+) = 2,5-dihydroxypyridine + succinate semialdehyde + 2 NAD(+) + H2O. Its pathway is alkaloid degradation; nicotine degradation. With respect to regulation, inhibited by Cu(2+) and Zn(2+). Functionally, involved in the nicotine degradation. Catalyzes the cleavage of 6-hydroxy-3-succinoylpyridine (HSP) by incorporation of oxygen at the 3-position to produce to 2,5-dihydroxypyridine (DHP) and succinic semialdehyde. This chain is 6-hydroxy-3-succinoylpyridine 3-monooxygenase HspB, found in Pseudomonas putida (strain DSM 28022 / S16).